Consider the following 334-residue polypeptide: Phosphoribosylformylglycinamidine cyclo-ligase (334 aa).

It belongs to the AIR synthase family.

The protein resides in the cytoplasm. It catalyses the reaction 2-formamido-N(1)-(5-O-phospho-beta-D-ribosyl)acetamidine + ATP = 5-amino-1-(5-phospho-beta-D-ribosyl)imidazole + ADP + phosphate + H(+). The protein operates within purine metabolism; IMP biosynthesis via de novo pathway; 5-amino-1-(5-phospho-D-ribosyl)imidazole from N(2)-formyl-N(1)-(5-phospho-D-ribosyl)glycinamide: step 2/2. In Pyrococcus horikoshii (strain ATCC 700860 / DSM 12428 / JCM 9974 / NBRC 100139 / OT-3), this protein is Phosphoribosylformylglycinamidine cyclo-ligase.